Consider the following 371-residue polypeptide: Protein OSB2, chloroplastic (371 aa).

Residues M1–R20 constitute a chloroplast transit peptide. The segment at G45–E64 is disordered. In terms of domain architecture, SSB spans V97–Q195. PDF region stretches follow at residues W237 to E289 and W312 to P360.

Expressed in the floral abscission zone.

The protein localises to the plastid. Its subcellular location is the chloroplast. In terms of biological role, binds preferentially single-stranded DNA. Does not bind to RNA. The protein is Protein OSB2, chloroplastic (OSB2) of Arabidopsis thaliana (Mouse-ear cress).